Consider the following 328-residue polypeptide: GTP 3',8-cyclase (328 aa).

Residues 1 to 229 (MNQVDYLRIS…DAQVRGSGPA (229 aa)) enclose the Radical SAM core domain. Arginine 8 serves as a coordination point for GTP. [4Fe-4S] cluster is bound by residues cysteine 15 and cysteine 19. An S-adenosyl-L-methionine-binding site is contributed by tyrosine 21. Residue cysteine 22 coordinates [4Fe-4S] cluster. Residue arginine 60 participates in GTP binding. An S-adenosyl-L-methionine-binding site is contributed by glycine 64. Residue threonine 91 participates in GTP binding. Serine 115 contacts S-adenosyl-L-methionine. Position 155 (lysine 155) interacts with GTP. S-adenosyl-L-methionine is bound at residue methionine 189. Positions 252 and 255 each coordinate [4Fe-4S] cluster. 257-259 (RMR) serves as a coordination point for GTP. Cysteine 269 serves as a coordination point for [4Fe-4S] cluster.

This sequence belongs to the radical SAM superfamily. MoaA family. Monomer and homodimer. [4Fe-4S] cluster serves as cofactor.

It catalyses the reaction GTP + AH2 + S-adenosyl-L-methionine = (8S)-3',8-cyclo-7,8-dihydroguanosine 5'-triphosphate + 5'-deoxyadenosine + L-methionine + A + H(+). Its pathway is cofactor biosynthesis; molybdopterin biosynthesis. Its function is as follows. Catalyzes the cyclization of GTP to (8S)-3',8-cyclo-7,8-dihydroguanosine 5'-triphosphate. The chain is GTP 3',8-cyclase from Trichormus variabilis (strain ATCC 29413 / PCC 7937) (Anabaena variabilis).